Consider the following 140-residue polypeptide: Ribonuclease P protein component (140 aa).

Belongs to the RnpA family. Consists of a catalytic RNA component (M1 or rnpB) and a protein subunit.

It catalyses the reaction Endonucleolytic cleavage of RNA, removing 5'-extranucleotides from tRNA precursor.. Functionally, RNaseP catalyzes the removal of the 5'-leader sequence from pre-tRNA to produce the mature 5'-terminus. It can also cleave other RNA substrates such as 4.5S RNA. The protein component plays an auxiliary but essential role in vivo by binding to the 5'-leader sequence and broadening the substrate specificity of the ribozyme. The sequence is that of Ribonuclease P protein component from Nostoc punctiforme (strain ATCC 29133 / PCC 73102).